Here is a 154-residue protein sequence, read N- to C-terminus: Small ribosomal subunit protein bS6 (154 aa).

The interval 107–154 is disordered; it reads KSDDRERGFRGPKPPGRFESGRKRGYDDREEFRARAGGDDDDRGLDQE. Positions 125 to 154 are enriched in basic and acidic residues; that stretch reads ESGRKRGYDDREEFRARAGGDDDDRGLDQE.

It belongs to the bacterial ribosomal protein bS6 family.

Functionally, binds together with bS18 to 16S ribosomal RNA. The protein is Small ribosomal subunit protein bS6 of Granulibacter bethesdensis (strain ATCC BAA-1260 / CGDNIH1).